Consider the following 276-residue polypeptide: UDP-3-O-acyl-N-acetylglucosamine deacetylase (276 aa).

3 residues coordinate Zn(2+): His-76, His-234, and Asp-238. His-261 acts as the Proton donor in catalysis.

It belongs to the LpxC family. Zn(2+) is required as a cofactor.

The enzyme catalyses a UDP-3-O-[(3R)-3-hydroxyacyl]-N-acetyl-alpha-D-glucosamine + H2O = a UDP-3-O-[(3R)-3-hydroxyacyl]-alpha-D-glucosamine + acetate. Its pathway is glycolipid biosynthesis; lipid IV(A) biosynthesis; lipid IV(A) from (3R)-3-hydroxytetradecanoyl-[acyl-carrier-protein] and UDP-N-acetyl-alpha-D-glucosamine: step 2/6. Its function is as follows. Catalyzes the hydrolysis of UDP-3-O-myristoyl-N-acetylglucosamine to form UDP-3-O-myristoylglucosamine and acetate, the committed step in lipid A biosynthesis. The polypeptide is UDP-3-O-acyl-N-acetylglucosamine deacetylase (Synechocystis sp. (strain ATCC 27184 / PCC 6803 / Kazusa)).